Here is a 359-residue protein sequence, read N- to C-terminus: Histidinol-phosphate aminotransferase (359 aa).

Lysine 217 bears the N6-(pyridoxal phosphate)lysine mark.

This sequence belongs to the class-II pyridoxal-phosphate-dependent aminotransferase family. Histidinol-phosphate aminotransferase subfamily. As to quaternary structure, homodimer. Requires pyridoxal 5'-phosphate as cofactor.

The catalysed reaction is L-histidinol phosphate + 2-oxoglutarate = 3-(imidazol-4-yl)-2-oxopropyl phosphate + L-glutamate. It functions in the pathway amino-acid biosynthesis; L-histidine biosynthesis; L-histidine from 5-phospho-alpha-D-ribose 1-diphosphate: step 7/9. This Salmonella paratyphi A (strain ATCC 9150 / SARB42) protein is Histidinol-phosphate aminotransferase.